The sequence spans 527 residues: Benzoate--CoA ligase (527 aa).

The protein belongs to the ATP-dependent AMP-binding enzyme family. Benzoate-CoA ligase subfamily. As to quaternary structure, monomer.

It carries out the reaction benzoate + ATP + CoA = benzoyl-CoA + AMP + diphosphate. Catalyzes the ligation of benzoate and CoA to form benzoyl-CoA at the expense of ATP. The enzyme also ligates 2-aminobenzoate and CoA. The enzyme shows activity toward a number of benzoate derivatives. This Thauera aromatica protein is Benzoate--CoA ligase (bclA).